We begin with the raw amino-acid sequence, 296 residues long: NAD kinase (296 aa).

Catalysis depends on Asp-72, which acts as the Proton acceptor. NAD(+) contacts are provided by residues 72-73 (DG), 146-147 (ND), Arg-157, Lys-174, Asp-176, 187-192 (TAYALS), and Gln-247.

It belongs to the NAD kinase family. The cofactor is a divalent metal cation.

It is found in the cytoplasm. The enzyme catalyses NAD(+) + ATP = ADP + NADP(+) + H(+). Functionally, involved in the regulation of the intracellular balance of NAD and NADP, and is a key enzyme in the biosynthesis of NADP. Catalyzes specifically the phosphorylation on 2'-hydroxyl of the adenosine moiety of NAD to yield NADP. The chain is NAD kinase from Pseudomonas entomophila (strain L48).